The following is a 156-amino-acid chain: 2-C-methyl-D-erythritol 2,4-cyclodiphosphate synthase (156 aa).

Residues Asp-8 and His-10 each contribute to the a divalent metal cation site. Residues 8-10 (DVH) and 34-35 (HS) each bind 4-CDP-2-C-methyl-D-erythritol 2-phosphate. Residue His-42 participates in a divalent metal cation binding. 4-CDP-2-C-methyl-D-erythritol 2-phosphate is bound by residues 56–58 (DIG), 61–65 (FPDTD), 100–106 (AQRPKMA), 132–135 (TTEE), and Phe-139.

It belongs to the IspF family. In terms of assembly, homotrimer. Requires a divalent metal cation as cofactor.

It carries out the reaction 4-CDP-2-C-methyl-D-erythritol 2-phosphate = 2-C-methyl-D-erythritol 2,4-cyclic diphosphate + CMP. The protein operates within isoprenoid biosynthesis; isopentenyl diphosphate biosynthesis via DXP pathway; isopentenyl diphosphate from 1-deoxy-D-xylulose 5-phosphate: step 4/6. Functionally, involved in the biosynthesis of isopentenyl diphosphate (IPP) and dimethylallyl diphosphate (DMAPP), two major building blocks of isoprenoid compounds. Catalyzes the conversion of 4-diphosphocytidyl-2-C-methyl-D-erythritol 2-phosphate (CDP-ME2P) to 2-C-methyl-D-erythritol 2,4-cyclodiphosphate (ME-CPP) with a corresponding release of cytidine 5-monophosphate (CMP). This is 2-C-methyl-D-erythritol 2,4-cyclodiphosphate synthase from Clostridium perfringens (strain ATCC 13124 / DSM 756 / JCM 1290 / NCIMB 6125 / NCTC 8237 / Type A).